The sequence spans 326 residues: Probable cell division protein WhiA (326 aa).

Residues 275–308 (SLDELGRLADPPMTKDAIAGRIRRLLAMADKRAL) constitute a DNA-binding region (H-T-H motif).

It belongs to the WhiA family.

Its function is as follows. Involved in cell division and chromosome segregation. In Arthrobacter sp. (strain FB24), this protein is Probable cell division protein WhiA.